The sequence spans 453 residues: Aldehyde dehydrogenase, dimeric NADP-preferring (453 aa).

Serine 2 carries the N-acetylserine modification. Lysine 178 is subject to N6-acetyllysine. 188–193 (GSTAVG) provides a ligand contact to NAD(+). At lysine 194 the chain carries N6-acetyllysine. Active-site residues include glutamate 210 and cysteine 244.

Belongs to the aldehyde dehydrogenase family. As to quaternary structure, homodimer.

Its subcellular location is the cytoplasm. It catalyses the reaction an aldehyde + NAD(+) + H2O = a carboxylate + NADH + 2 H(+). The enzyme catalyses octanal + NAD(+) + H2O = octanoate + NADH + 2 H(+). Its function is as follows. ALDHs play a major role in the detoxification of alcohol-derived acetaldehyde. They are involved in the metabolism of corticosteroids, biogenic amines, neurotransmitters, and lipid peroxidation. Oxidizes medium and long chain aldehydes into non-toxic fatty acids. Preferentially oxidizes aromatic aldehyde substrates. Comprises about 50 percent of corneal epithelial soluble proteins. May play a role in preventing corneal damage caused by ultraviolet light. The protein is Aldehyde dehydrogenase, dimeric NADP-preferring (Aldh3a1) of Rattus norvegicus (Rat).